The following is a 517-amino-acid chain: Xylosidase/arabinosidase (517 aa).

Asp-15 serves as the catalytic Proton acceptor. Glu-185 functions as the Proton donor in the catalytic mechanism.

The protein belongs to the glycosyl hydrolase 43 family.

It carries out the reaction Hydrolysis of (1-&gt;4)-beta-D-xylans, to remove successive D-xylose residues from the non-reducing termini.. The catalysed reaction is Hydrolysis of terminal non-reducing alpha-L-arabinofuranoside residues in alpha-L-arabinosides.. Has a 1.6-fold higher activity as an arabinosidase than as a beta-xylosidase when tested on the substrates nitrophenyl-beta-D-xylopyranoside and P-nitrophenyl-alpha-L-arabinofuranoside. The chain is Xylosidase/arabinosidase (xylB) from Butyrivibrio fibrisolvens.